An 838-amino-acid polypeptide reads, in one-letter code: Tuftelin-interacting protein 11 (838 aa).

The span at methionine 1–histidine 13 shows a compositional bias: basic and acidic residues. The required for interaction with DHX15 stretch occupies residues methionine 1–threonine 51. Disordered regions lie at residues methionine 1 to aspartate 74 and leucine 86 to threonine 137. Position 2 is a phosphoserine (serine 2). Residues leucine 14–aspartate 29 are compositionally biased toward acidic residues. Residues glutamine 45–proline 65 are compositionally biased toward basic and acidic residues. A phosphoserine mark is found at serine 60, serine 96, and serine 99. Residues glutamate 92–alanine 101 are compositionally biased toward acidic residues. Residues glutamate 102–proline 117 are compositionally biased toward basic and acidic residues. Residue serine 145 is modified to Phosphoserine. The region spanning threonine 150–serine 196 is the G-patch domain. A disordered region spans residues alanine 193 to proline 237. Residue serine 211 is modified to Phosphoserine. Over residues glutamate 218 to glycine 232 the composition is skewed to basic and acidic residues. The short motif at valine 701–asparagine 706 is the Nuclear localization signal element. Residues isoleucine 711–leucine 735 form a required for nuclear speckle localization region.

Belongs to the TFP11/STIP family. Identified in the spliceosome C complex. Found in the Intron Large (IL) complex, a post-mRNA release spliceosomal complex containing the excised intron, U2, U5 and U6 snRNPs, and splicing factors. Interacts with TUFT1. Interacts with DHX15; indicative for a recruitment of DHX15 to the IL complex. Interacts with GCFC2. Widely expressed. In tooth it is expressed in ameloblasts and odontoblasts.

It localises to the cytoplasm. Its subcellular location is the nucleus. Involved in pre-mRNA splicing, specifically in spliceosome disassembly during late-stage splicing events. Intron turnover seems to proceed through reactions in two lariat-intron associated complexes termed Intron Large (IL) and Intron Small (IS). In cooperation with DHX15 seems to mediate the transition of the U2, U5 and U6 snRNP-containing IL complex to the snRNP-free IS complex leading to efficient debranching and turnover of excised introns. May play a role in the differentiation of ameloblasts and odontoblasts or in the forming of the enamel extracellular matrix. This is Tuftelin-interacting protein 11 (Tfip11) from Mus musculus (Mouse).